The primary structure comprises 432 residues: 3-phosphoshikimate 1-carboxyvinyltransferase (432 aa).

Positions 23, 24, and 28 each coordinate 3-phosphoshikimate. Residue K23 coordinates phosphoenolpyruvate. Positions 95 and 123 each coordinate phosphoenolpyruvate. Residues S167, Q169, D317, and K344 each coordinate 3-phosphoshikimate. A phosphoenolpyruvate-binding site is contributed by Q169. The active-site Proton acceptor is the D317. Phosphoenolpyruvate contacts are provided by R348 and R390.

It belongs to the EPSP synthase family. In terms of assembly, monomer.

The protein resides in the cytoplasm. The catalysed reaction is 3-phosphoshikimate + phosphoenolpyruvate = 5-O-(1-carboxyvinyl)-3-phosphoshikimate + phosphate. Its pathway is metabolic intermediate biosynthesis; chorismate biosynthesis; chorismate from D-erythrose 4-phosphate and phosphoenolpyruvate: step 6/7. Its function is as follows. Catalyzes the transfer of the enolpyruvyl moiety of phosphoenolpyruvate (PEP) to the 5-hydroxyl of shikimate-3-phosphate (S3P) to produce enolpyruvyl shikimate-3-phosphate and inorganic phosphate. This chain is 3-phosphoshikimate 1-carboxyvinyltransferase, found in Staphylococcus aureus (strain COL).